Here is a 263-residue protein sequence, read N- to C-terminus: Translation initiation factor 2 subunit alpha (263 aa).

In terms of domain architecture, S1 motif spans 12–83; it reads GEILIATVKQ…RKGTIDVSLK (72 aa).

It belongs to the eIF-2-alpha family. As to quaternary structure, heterotrimer composed of an alpha, a beta and a gamma chain.

Functionally, eIF-2 functions in the early steps of protein synthesis by forming a ternary complex with GTP and initiator tRNA. The chain is Translation initiation factor 2 subunit alpha from Sulfurisphaera tokodaii (strain DSM 16993 / JCM 10545 / NBRC 100140 / 7) (Sulfolobus tokodaii).